The sequence spans 25 residues: Retinol-binding protein 3 (25 aa).

The protein localises to the secreted. It localises to the extracellular space. The protein resides in the extracellular matrix. Its subcellular location is the interphotoreceptor matrix. Functionally, IRBP shuttles 11-cis and all trans retinoids between the retinol isomerase in the pigment epithelium and the visual pigments in the photoreceptor cells of the retina. This chain is Retinol-binding protein 3 (RBP3), found in Sus scrofa (Pig).